The following is a 363-amino-acid chain: Pyruvate dehydrogenase E1 component subunit beta-1, mitochondrial (363 aa).

Residues 1 to 29 (MLGILRQRAIDGASTLRRTRFALVSARSY) constitute a mitochondrion transit peptide. Glu92 is a thiamine diphosphate binding site. The K(+) site is built by Ile145, Ala193, Ile194, and Asp196. Glycyl lysine isopeptide (Lys-Gly) (interchain with G-Cter in ubiquitin) cross-links involve residues Lys247 and Lys254.

Tetramer of 2 alpha and 2 beta subunits. Thiamine diphosphate serves as cofactor. In terms of tissue distribution, expressed in roots, immature rosettes, and mature rosettes.

The protein resides in the mitochondrion matrix. The enzyme catalyses N(6)-[(R)-lipoyl]-L-lysyl-[protein] + pyruvate + H(+) = N(6)-[(R)-S(8)-acetyldihydrolipoyl]-L-lysyl-[protein] + CO2. Functionally, the pyruvate dehydrogenase complex catalyzes the overall conversion of pyruvate to acetyl-CoA and CO(2). It contains multiple copies of three enzymatic components: pyruvate dehydrogenase (E1), dihydrolipoamide acetyltransferase (E2) and lipoamide dehydrogenase (E3). The polypeptide is Pyruvate dehydrogenase E1 component subunit beta-1, mitochondrial (PDH2) (Arabidopsis thaliana (Mouse-ear cress)).